The chain runs to 441 residues: DNA-binding protein (441 aa).

Residues 1-18 (MERTPKRAHGFRSTKPVK) are compositionally biased toward basic residues. The disordered stretch occupies residues 1–85 (MERTPKRAHG…EESPEAPLSD (85 aa)). Acidic residues-rich tracts occupy residues 24 to 33 (MMEEEEEEVE) and 67 to 79 (VDDEENASDEESP). Zn(2+)-binding residues include Cys-191 and His-193. Residues 204-236 (VELNPSSEAGKRALAEQNGVIEKNRFGRQVVVL) form a flexible loop region. Positions 244, 262, 305, 307, 359, and 380 each coordinate Zn(2+). The C-terminal arm, DBP binding stretch occupies residues 426 to 441 (EVLAPVSPIASDDPFA).

The protein belongs to the adenoviridae E2A DNA-binding protein family. Homomultimerizes on viral ssDNA bound to pTP. Forms a initiation complex with viral polymerase, pTP and hosts NFIA and POU2F1/OCT1. Interacts with host SRCAP.

The protein localises to the host nucleus. Its function is as follows. Plays a role in the elongation phase of viral strand displacement replication by unwinding the template in an ATP-independent fashion, employing its capacity to form multimers. Also enhances the rate of initiation. Released from template upon second strand synthesis. Assembles in complex with viral pTP, viral pol, host NFIA and host POU2F1/OCT1 on viral origin of replication. Covers the whole ssDNA genome during synthesis. The complementary strand synthesis induces its relese from DNA template. May inhibit cellular transcription mediated by the interaction between host SRCAP and CBP. The sequence is that of DNA-binding protein from Fowl adenovirus A serotype 1 (strain CELO / Phelps) (FAdV-1).